Here is a 1157-residue protein sequence, read N- to C-terminus: MAQFGGQKNPPPWATQFTATAVSQPGPLAVQQSSLLGASPTIYTQQSALAAAGLASPSPANYQLSQTAALQQQAAAAAAAAAAALQQQYTQPQQTIYSVQQQLQPPPQAILTQPAVALPTSLALSTPQQAAQITVSYPTPRSNQQQTQPQKQRVFTGVVTKLHETFGFVDEDVFFQLTAVKGKSPQAGDRVLVEATYNPNMPFKWNAQRIQTLPNQNPASAQSLIKNPAAVMQPVAQPTAYAVQTQPPPQAQTLLQAQISAATLTPLLQTQTSPLLQQPQQKAGLLQTPVRIVSQPQPVRRIEPPSRFSVRNDRGDSILSRKDDRNRERERERRRSRDRSPQRKRSRERSPRRERERSPRRPRRVVPRYTVQISKFCLDCPGCDTMELRRRYQNLYIPSDFFDAQFTWVDAFPISRPFQLGNYSNFYIMHKEVDPLEKNTAIVDPPDADHTYSAKVMLLASPSLEELYHKSCALAEDPIEVREGFQHPARLIKFLVGMKGKDEAMAIGGHWSPSLDGPNPDKDPSVLIRTAVRCCKALTGIELSLCTQWYRFAEIRYHRPEETHKGRTVPAHVETVVLFFPDVWHCLPTRSEWENLCHGYKQQLVDKLQGDRKEADGEQEEEDKEDGDAKEISTPTHWSKLDPKIMKVNDLRKELESRTLSSKGLKSQLIARLTKQLRIEEQKEEQKELEKCEKEEEEEEERKSEDDKEEEERKRQEELERQRREKRYMLPDEPAIIVHPNWSAKNGKFDCSIMSLSVLLDYRIEDNKEHSFEVSLFAELFNEMLQRDFGVRIYRELLALPEKEEKKDKEKKCKKEDKRERKEDKDDDDEPKPKRRKSSDDKIKLEEKEERKRDDRRKEDYREEDDPDYENQDDYEPIAAEEDDGDYDDREDDDDDSSSKDKREDKRDGNRYSKERQSKDKEKDKKQMVTVNRDLLMAFVYFDQSHCGYLLEKDLEEILYTLGLHLSRAQVKKLFTKILLKESLLYRKLTDTATEDGSHEETDPLHNDILGNCSLLPSKAVRTGLSTVEDKGGLIVYKGAMVDVGSLLQKLEKSEKTRTELEHRLQTLESKTEEDEKTISQLEASNRNLSEELKQTKDDVGHLKDSLKAAEDTRSLYEDQLTNTIKNLSAAMGEIQVVLNKNPSTTEDQKSKENGSS.

Disordered regions lie at residues 289-365 and 608-641; these read PVRI…PRRV and LQGD…WSKL. Composition is skewed to basic and acidic residues over residues 300-341 and 348-359; these read RRIE…DRSP and ERSPRRERERSP. Residues 601–625 are a coiled coil; the sequence is KQQLVDKLQGDRKEADGEQEEEDKE. A compositionally biased stretch (acidic residues) spans 617–628; it reads GEQEEEDKEDGD. In terms of domain architecture, SAP spans 643 to 677; the sequence is PKIMKVNDLRKELESRTLSSKGLKSQLIARLTKQL. Basic and acidic residues-rich tracts occupy residues 685 to 694, 701 to 721, 804 to 824, and 838 to 861; these read EQKELEKCEK, ERKS…ELER, EEKK…RKED, and SSDD…KEDY. Disordered regions lie at residues 685–721 and 804–926; these read EQKE…ELER and EEKK…KDKK. Residues 862-896 show a composition bias toward acidic residues; the sequence is REEDDPDYENQDDYEPIAAEEDDGDYDDREDDDDD. Basic and acidic residues predominate over residues 897-926; the sequence is SSSKDKREDKRDGNRYSKERQSKDKEKDKK. A coiled-coil region spans residues 1043-1128; it reads DVGSLLQKLE…DQLTNTIKNL (86 aa). Residue S1157 is modified to Phosphoserine.

Its subcellular location is the cytoplasm. It localises to the perinuclear region. Transcriptional coactivator for nuclear receptors which may play an important role in regulating cell growth and apoptosis. This chain is Cell division cycle and apoptosis regulator protein 1 (ccar1), found in Xenopus laevis (African clawed frog).